We begin with the raw amino-acid sequence, 199 residues long: DNA dC-&gt;dU-editing enzyme APOBEC-3A (199 aa).

One can recognise a CMP/dCMP-type deaminase domain in the interval 27-143 (GRHKTYLCYE…PLYKEALQML (117 aa)). H70 provides a ligand contact to Zn(2+). Catalysis depends on E72, which acts as the Proton donor. Zn(2+)-binding residues include C101 and C106.

It belongs to the cytidine and deoxycytidylate deaminase family. In terms of assembly, interacts with AGO2. Interacts with TRIB3 (via N-terminus). Zn(2+) is required as a cofactor. As to expression, expressed in peripheral leukocytes with higher expression in CD14-positive phagocytic cells. Highly expressed in keratinocytes and in periphery blood monocytes. Also detected in non-lymphoid tissues including lung and adipose tissues. Found at high levels in colorectal adenocarcinoma, Burkitt's lymphoma and chronic myelogenous leukemia.

The protein resides in the nucleus. The protein localises to the cytoplasm. It carries out the reaction a 2'-deoxycytidine in single-stranded DNA + H2O + H(+) = a 2'-deoxyuridine in single-stranded DNA + NH4(+). Its function is as follows. DNA deaminase (cytidine deaminase) with restriction activity against viruses, foreign DNA and mobility of retrotransposons. Exhibits antiviral activity against adeno-associated virus (AAV) and human T-cell leukemia virus type 1 (HTLV-1) and may inhibit the mobility of LTR and non-LTR retrotransposons. Selectively targets single-stranded DNA and can deaminate both methylcytosine and cytosine in foreign DNA. Can induce somatic hypermutation in the nuclear and mitochondrial DNA. May also play a role in the epigenetic regulation of gene expression through the process of active DNA demethylation. This is DNA dC-&gt;dU-editing enzyme APOBEC-3A (APOBEC3A) from Homo sapiens (Human).